A 486-amino-acid polypeptide reads, in one-letter code: Cardiolipin synthase A (486 aa).

Helical transmembrane passes span 3-23 and 38-58; these read TFYTVISWLAIFGYWLLIASV and MAWLLIIYILPLVGIIAYLSF. PLD phosphodiesterase domains are found at residues 219-246 and 399-426; these read MDLRQHRKVVLIDNFIAYTGSMNLVDPR and EGGLLHTKSVLVDGQLSLVGTVNLDMRS. Active-site residues include histidine 224, lysine 226, aspartate 231, histidine 404, lysine 406, and aspartate 411.

It belongs to the phospholipase D family. Cardiolipin synthase subfamily. ClsA sub-subfamily.

The protein localises to the cell inner membrane. It catalyses the reaction 2 a 1,2-diacyl-sn-glycero-3-phospho-(1'-sn-glycerol) = a cardiolipin + glycerol. In terms of biological role, catalyzes the reversible phosphatidyl group transfer from one phosphatidylglycerol molecule to another to form cardiolipin (CL) (diphosphatidylglycerol) and glycerol. The sequence is that of Cardiolipin synthase A from Edwardsiella ictaluri (strain 93-146).